A 357-amino-acid chain; its full sequence is Cinnamyl alcohol dehydrogenase 7 (357 aa).

Residue Cys46 participates in Zn(2+) binding. Thr48 is a binding site for NADP(+). Residues His68, Glu69, Cys99, Cys102, Cys105, Cys113, and Cys162 each contribute to the Zn(2+) site. Residues Thr166, 187–192, 210–215, Thr250, Gly274, and 297–299 contribute to the NADP(+) site; these read GLGGLG, STSERK, and SMV.

It belongs to the zinc-containing alcohol dehydrogenase family. Homodimer. The cofactor is Zn(2+). In terms of tissue distribution, expressed in the differentiation and elongation zones of primary and lateral roots. Expressed in the hypocotyl, cotyledon and leaf veins, hydathodes and trichomes. In stems, expressed in the vascular cambium region. Expressed in the style, anthers, stamen filaments, vascular tissues of sepals and stigmatic regions in flowers, and abscission, style and stigmatic regions of siliques and seed testa.

The catalysed reaction is (E)-cinnamyl alcohol + NADP(+) = (E)-cinnamaldehyde + NADPH + H(+). It functions in the pathway aromatic compound metabolism; phenylpropanoid biosynthesis. Functionally, involved in lignin biosynthesis. Catalyzes the final step specific for the production of lignin monomers. Catalyzes the NADPH-dependent reduction of coniferaldehyde, 5-hydroxyconiferaldehyde, sinapaldehyde, 4-coumaraldehyde and caffeyl aldehyde to their respective alcohols. In Arabidopsis thaliana (Mouse-ear cress), this protein is Cinnamyl alcohol dehydrogenase 7 (CAD7).